Here is a 129-residue protein sequence, read N- to C-terminus: Small ribosomal subunit protein uS9 (129 aa).

A disordered region spans residues 108–129; the sequence is RMVERKKYGKKKARKSFQFSKR. The span at 114-129 shows a compositional bias: basic residues; the sequence is KYGKKKARKSFQFSKR.

The protein belongs to the universal ribosomal protein uS9 family.

This chain is Small ribosomal subunit protein uS9, found in Chlorobaculum tepidum (strain ATCC 49652 / DSM 12025 / NBRC 103806 / TLS) (Chlorobium tepidum).